A 317-amino-acid chain; its full sequence is Ribonuclease Z (317 aa).

Residues histidine 61, histidine 63, aspartate 65, histidine 66, histidine 153, aspartate 221, and histidine 280 each contribute to the Zn(2+) site. Aspartate 65 serves as the catalytic Proton acceptor.

Belongs to the RNase Z family. Homodimer. Requires Zn(2+) as cofactor.

It catalyses the reaction Endonucleolytic cleavage of RNA, removing extra 3' nucleotides from tRNA precursor, generating 3' termini of tRNAs. A 3'-hydroxy group is left at the tRNA terminus and a 5'-phosphoryl group is left at the trailer molecule.. Its function is as follows. Zinc phosphodiesterase, which displays some tRNA 3'-processing endonuclease activity. Probably involved in tRNA maturation, by removing a 3'-trailer from precursor tRNA. This is Ribonuclease Z from Alkaliphilus oremlandii (strain OhILAs) (Clostridium oremlandii (strain OhILAs)).